The chain runs to 857 residues: MSFQLDTSTHGAEIRNVYEKVLSGADDCSWAIFGYEKGQGNILKVVASGNDNDEFLDEFDENAVLFGFLRVKDVNTGLNKFVLVCWCGEAAARKGLFSIHMATVSNLLKGYHVQITGRESSDLNMDDIIRRVADASGSKYSVHTSNSTPQSKHNAFYDASQTFGSTAKVAPAPAPSTKTPLANISKPVVQAQKDSKDNSWDDSSKQSNTQTANTTSNLRVPVNASWSDAGRKEKSQENKPKPTPFGSGGPSKPTPFESHGPAKQISVQPSEHPKPSISTTTTGSSYRSAESSHAPTTPDHFKLTPLTKLEPQPPSGSPSKKPVSELEELHTAGNVNLSARRALFEKKESSTKNVENPVSHHLKSPVRTSFPPASTTASKQDSPSTVPVDKQETAKPINKQVSSNETSAQEEPRESVAALRARFAKANVSENNDPPTFPKTAAKISSFNSKAGTSFAKPRPFTNNPNPISAPEKPTSGESLSLNPPPAMPKVFPERDISSASQKAAQPSVITPSVPQPPAAPVVPEAPSVHQPPAAPVAPEVPSAPQRPAAPVVPEAPSVPQRPAVPVVPEALSVPQPPVAPVAPEVPSVPQPPVAPVVPEAPSVPQPPVAPVAPEVPSVPQRPAVPVVPEAPSVPQPPAAPVVPEVPSVPQRPAVPVVPEAPSVPQPPAAPVVPEVPSVPQPPAVPVVPEAGQLNEPVVPPLPPHDETQEPQVGGDVKATEHTQPTKTPAIVIYDYSPEEENEIELVENEQIQILEFVDDGWWLGENSKGQQGLFPSNYVEITGPNETANNPPAEPQAGGPGKSVKAIYDYQAQEDNELSFFEDEIIANVDCVDPNWWEGECHGHRGLFPSNYVEEI.

The ADF-H domain occupies 6 to 133 (DTSTHGAEIR…NMDDIIRRVA (128 aa)). Disordered stretches follow at residues 167-562 (AKVA…VPQR), 585-622 (EVPS…VPQR), and 693-723 (QLNE…TEHT). Positions 193–204 (KDSKDNSWDDSS) are enriched in basic and acidic residues. Residues 205-217 (KQSNTQTANTTSN) show a composition bias toward low complexity. The span at 229–240 (AGRKEKSQENKP) shows a compositional bias: basic and acidic residues. 5 stretches are compositionally biased toward polar residues: residues 276 to 295 (SIST…SHAP), 371 to 385 (PPAS…SPST), 399 to 409 (KQVSSNETSAQ), 443 to 452 (KISSFNSKAG), and 498 to 511 (SSAS…SVIT). Residues 522–561 (VVPEAPSVHQPPAAPVAPEVPSAPQRPAAPVVPEAPSVPQ) are compositionally biased toward low complexity. Composition is skewed to pro residues over residues 587-596 (PSVPQPPVAP) and 602-611 (PSVPQPPVAP). Residues 612–622 (VAPEVPSVPQR) are compositionally biased toward low complexity. SH3 domains are found at residues 725 to 785 (PTKT…ITGP) and 800 to 857 (GPGK…VEEI).

This chain is Protein app1 (app1), found in Schizosaccharomyces pombe (strain 972 / ATCC 24843) (Fission yeast).